Reading from the N-terminus, the 205-residue chain is ATP-dependent Clp protease proteolytic subunit (205 aa).

Ser101 (nucleophile) is an active-site residue. The active site involves His126.

The protein belongs to the peptidase S14 family. Component of the chloroplastic Clp protease core complex.

It localises to the plastid. The protein localises to the chloroplast stroma. It catalyses the reaction Hydrolysis of proteins to small peptides in the presence of ATP and magnesium. alpha-casein is the usual test substrate. In the absence of ATP, only oligopeptides shorter than five residues are hydrolyzed (such as succinyl-Leu-Tyr-|-NHMec, and Leu-Tyr-Leu-|-Tyr-Trp, in which cleavage of the -Tyr-|-Leu- and -Tyr-|-Trp bonds also occurs).. Functionally, cleaves peptides in various proteins in a process that requires ATP hydrolysis. Has a chymotrypsin-like activity. Plays a major role in the degradation of misfolded proteins. The polypeptide is ATP-dependent Clp protease proteolytic subunit (Pinus contorta (Shore pine)).